Consider the following 348-residue polypeptide: UDP-glucose 4-epimerase (348 aa).

Residues 12-14, 33-37, 66-67, F88, and K92 each bind NAD(+); these read GYI, DNFHN, and DI. Position 132-134 (132-134) interacts with substrate; that stretch reads SAT. Y157 serves as the catalytic Proton acceptor. Residues K161 and Y185 each contribute to the NAD(+) site. Substrate contacts are provided by residues 185–187, 206–208, 224–226, R239, and 300–303; these read YFN, NNL, NVF, and REGD.

It belongs to the NAD(P)-dependent epimerase/dehydratase family. In terms of assembly, homodimer. It depends on NAD(+) as a cofactor.

The enzyme catalyses UDP-alpha-D-glucose = UDP-alpha-D-galactose. It carries out the reaction UDP-N-acetyl-alpha-D-glucosamine = UDP-N-acetyl-alpha-D-galactosamine. It functions in the pathway carbohydrate metabolism; galactose metabolism. In terms of biological role, catalyzes two distinct but analogous reactions: the reversible epimerization of UDP-glucose to UDP-galactose and the reversible epimerization of UDP-N-acetylglucosamine to UDP-N-acetylgalactosamine. The reaction with UDP-Gal plays a critical role in the Leloir pathway of galactose catabolism in which galactose is converted to the glycolytic intermediate glucose 6-phosphate. It contributes to the catabolism of dietary galactose and enables the endogenous biosynthesis of both UDP-Gal and UDP-GalNAc when exogenous sources are limited. Both UDP-sugar interconversions are important in the synthesis of glycoproteins and glycolipids. This chain is UDP-glucose 4-epimerase (GALE), found in Pongo abelii (Sumatran orangutan).